The sequence spans 699 residues: Polyribonucleotide nucleotidyltransferase (699 aa).

The Mg(2+) site is built by Asp-485 and Asp-491. A KH domain is found at 552-611 (PRITTIKINPEKIRDVIGKGGAVIRALTEETGTTIELEDDGTVKIASSNGEATKEAIRRI). The 69-residue stretch at 621-689 (GRIYNGKVIR…RQGRVRLSIK (69 aa)) folds into the S1 motif domain.

The protein belongs to the polyribonucleotide nucleotidyltransferase family. As to quaternary structure, component of the RNA degradosome, which is a multiprotein complex involved in RNA processing and mRNA degradation. The cofactor is Mg(2+).

It is found in the cytoplasm. It catalyses the reaction RNA(n+1) + phosphate = RNA(n) + a ribonucleoside 5'-diphosphate. In terms of biological role, involved in mRNA degradation. Catalyzes the phosphorolysis of single-stranded polyribonucleotides processively in the 3'- to 5'-direction. The polypeptide is Polyribonucleotide nucleotidyltransferase (Shewanella sp. (strain MR-4)).